The following is a 139-amino-acid chain: Large ribosomal subunit protein uL16 (139 aa).

It belongs to the universal ribosomal protein uL16 family. Part of the 50S ribosomal subunit.

Its function is as follows. Binds 23S rRNA and is also seen to make contacts with the A and possibly P site tRNAs. The chain is Large ribosomal subunit protein uL16 from Parvibaculum lavamentivorans (strain DS-1 / DSM 13023 / NCIMB 13966).